The following is a 1183-amino-acid chain: DNA-directed RNA polymerase subunit beta (1183 aa).

The tract at residues 1155–1183 is disordered; it reads ADVDEDDVNEHKVNIQQSSIPESQKETTD.

The protein belongs to the RNA polymerase beta chain family. In terms of assembly, the RNAP catalytic core consists of 2 alpha, 1 beta, 1 beta' and 1 omega subunit. When a sigma factor is associated with the core the holoenzyme is formed, which can initiate transcription.

The catalysed reaction is RNA(n) + a ribonucleoside 5'-triphosphate = RNA(n+1) + diphosphate. Functionally, DNA-dependent RNA polymerase catalyzes the transcription of DNA into RNA using the four ribonucleoside triphosphates as substrates. This chain is DNA-directed RNA polymerase subunit beta, found in Staphylococcus carnosus (strain TM300).